Consider the following 350-residue polypeptide: S-adenosylmethionine:tRNA ribosyltransferase-isomerase (350 aa).

The protein belongs to the QueA family. As to quaternary structure, monomer.

It is found in the cytoplasm. The catalysed reaction is 7-aminomethyl-7-carbaguanosine(34) in tRNA + S-adenosyl-L-methionine = epoxyqueuosine(34) in tRNA + adenine + L-methionine + 2 H(+). It participates in tRNA modification; tRNA-queuosine biosynthesis. In terms of biological role, transfers and isomerizes the ribose moiety from AdoMet to the 7-aminomethyl group of 7-deazaguanine (preQ1-tRNA) to give epoxyqueuosine (oQ-tRNA). The protein is S-adenosylmethionine:tRNA ribosyltransferase-isomerase of Saccharophagus degradans (strain 2-40 / ATCC 43961 / DSM 17024).